Reading from the N-terminus, the 345-residue chain is MDLSLLKALSEADAIASSEQEVRQILLEEADRLQKEVRFDGLGSVLIRLNESTGPKVMICAHMDEVGFMVRSISREGAIDVLPVGNVRMAARQLQPVRITTREECKIPGLLDGDRQGNDVSAMRVDIGARSYDEVMQAGIRPGDRVTFDTTFQVLPHQRVMGKAFDDRLGCYLLVTLLRELHDAELPAEVWLVASSSEEVGLRGGQTATRAVSPDVAIVLDTACWAKNFDYGAANHRQIGNGPMLVLSDKSLIAPPKLTAWVETVAAEIGVPLQADMFSNGGTDGGAVHLTGTGVPTVVMGPATRHGHCAASIADCRDILQMQQLLSALIQRLTRETVVQLTDFR.

Residues H62 and D166 each contribute to the a divalent metal cation site. The active-site Proton acceptor is E198. Residues E199, D221, and H308 each coordinate a divalent metal cation.

It belongs to the peptidase M42 family. Co(2+) serves as cofactor. It depends on Ni(2+) as a cofactor. The cofactor is Mn(2+). Requires Cu(2+) as cofactor.

Has a broad aminopeptidase activity on non-blocked peptides by progressively cleaving amino acids off the peptide substrate. Aminopeptidase activity stops at the residue before the first proline in the peptide. Cannot cleave when proline is the first N-terminal residue. The protein is Aminopeptidase YpdE (ypdE) of Escherichia coli (strain K12).